The primary structure comprises 438 residues: Aspartate--tRNA(Asp/Asn) ligase (438 aa).

Residue Glu-176 participates in L-aspartate binding. The aspartate stretch occupies residues 198–201 (QLYK). Arg-220 lines the L-aspartate pocket. ATP is bound by residues 220 to 222 (RAE), 228 to 230 (RHL), and Glu-361. Mg(2+) is bound by residues Glu-361 and Ser-364. Residues Ser-364 and Arg-368 each contribute to the L-aspartate site. Residue 409 to 412 (GADR) coordinates ATP.

This sequence belongs to the class-II aminoacyl-tRNA synthetase family. Type 2 subfamily. Homodimer. Requires Mg(2+) as cofactor.

It is found in the cytoplasm. It catalyses the reaction tRNA(Asx) + L-aspartate + ATP = L-aspartyl-tRNA(Asx) + AMP + diphosphate. In terms of biological role, aspartyl-tRNA synthetase with relaxed tRNA specificity since it is able to aspartylate not only its cognate tRNA(Asp) but also tRNA(Asn). Reaction proceeds in two steps: L-aspartate is first activated by ATP to form Asp-AMP and then transferred to the acceptor end of tRNA(Asp/Asn). The polypeptide is Aspartate--tRNA(Asp/Asn) ligase (Methanococcus maripaludis (strain C7 / ATCC BAA-1331)).